Reading from the N-terminus, the 205-residue chain is MSNIVWHQHSVDQADRAKLKGQNPVLLWFTGLSGAGKSTLAGALERALFDAGFHTYLLDGDNVRHGLCKDLGFSVADRDENLRRVGEVAKLMVDAGLVVLSAFISPTREERDSIRARFPEGQFIEVHVSTPLSICEQRDPKGLYVKARRGEISNFTGISSPYEAPLSAELTIDTSKGDLASQVRALIDYLTAIEVINPSRLTASA.

31-38 (GLSGAGKS) is a binding site for ATP. Catalysis depends on Ser-105, which acts as the Phosphoserine intermediate.

The protein belongs to the APS kinase family.

The enzyme catalyses adenosine 5'-phosphosulfate + ATP = 3'-phosphoadenylyl sulfate + ADP + H(+). It functions in the pathway sulfur metabolism; hydrogen sulfide biosynthesis; sulfite from sulfate: step 2/3. Catalyzes the synthesis of activated sulfate. The sequence is that of Adenylyl-sulfate kinase from Shewanella sp. (strain MR-7).